Here is a 159-residue protein sequence, read N- to C-terminus: Phosphopantetheine adenylyltransferase (159 aa).

Position 10 (threonine 10) interacts with substrate. ATP contacts are provided by residues threonine 10–phenylalanine 11 and histidine 18. Residues lysine 42, leucine 74, and arginine 88 each coordinate substrate. ATP-binding positions include glycine 89–arginine 91, glutamate 99, and tyrosine 124–serine 130.

It belongs to the bacterial CoaD family. In terms of assembly, homohexamer. It depends on Mg(2+) as a cofactor.

Its subcellular location is the cytoplasm. It catalyses the reaction (R)-4'-phosphopantetheine + ATP + H(+) = 3'-dephospho-CoA + diphosphate. It functions in the pathway cofactor biosynthesis; coenzyme A biosynthesis; CoA from (R)-pantothenate: step 4/5. Reversibly transfers an adenylyl group from ATP to 4'-phosphopantetheine, yielding dephospho-CoA (dPCoA) and pyrophosphate. The polypeptide is Phosphopantetheine adenylyltransferase (Campylobacter hominis (strain ATCC BAA-381 / DSM 21671 / CCUG 45161 / LMG 19568 / NCTC 13146 / CH001A)).